Consider the following 338-residue polypeptide: Citramalyl-CoA lyase, mitochondrial (338 aa).

A mitochondrion-targeting transit peptide spans 1–20 (MALCVLQNAVRGAAALPRLK). The substrate site is built by Tyr48, Lys55, and Lys59. Residues Lys55, Lys59, and Lys64 each carry the N6-acetyllysine modification. 2 positions are modified to N6-acetyllysine; alternate: Lys80 and Lys90. An N6-succinyllysine; alternate mark is found at Lys80 and Lys90. Arg105 contributes to the substrate binding site. Mg(2+) is bound by residues Glu169 and Asp204. 270–271 (IH) provides a ligand contact to substrate. The residue at position 307 (Lys307) is an N6-succinyllysine. Asp318 is a catalytic residue.

It belongs to the HpcH/HpaI aldolase family. Citrate lyase beta subunit-like subfamily. As to quaternary structure, homotrimer. It depends on Mg(2+) as a cofactor.

The protein localises to the mitochondrion. It catalyses the reaction glyoxylate + acetyl-CoA + H2O = (S)-malate + CoA + H(+). The enzyme catalyses propanoyl-CoA + glyoxylate + H2O = 3-methylmalate + CoA + H(+). The catalysed reaction is (3S)-citramalyl-CoA = pyruvate + acetyl-CoA. It carries out the reaction (S)-malyl-CoA + H2O = (S)-malate + CoA + H(+). In terms of biological role, mitochondrial citramalyl-CoA lyase indirectly involved in the vitamin B12 metabolism. Converts citramalyl-CoA into acetyl-CoA and pyruvate in the C5-dicarboxylate catabolism pathway. The C5-dicarboxylate catabolism pathway is required to detoxify itaconate, a vitamin B12-poisoning metabolite. Also acts as a malate synthase in vitro, converting glyoxylate and acetyl-CoA to malate. Also displays malyl-CoA thioesterase activity. Also acts as a beta-methylmalate synthase in vitro, by mediating conversion of glyoxylate and propionyl-CoA to beta-methylmalate. Also has very weak citramalate synthase activity in vitro. This chain is Citramalyl-CoA lyase, mitochondrial (Clybl), found in Rattus norvegicus (Rat).